Reading from the N-terminus, the 114-residue chain is FK506-binding protein 1 (114 aa).

An N-acetylserine modification is found at Ser-2. One can recognise a PPIase FKBP-type domain in the interval 26 to 114 (GDLVTIHYTG…VFDVELLKVN (89 aa)). Ser-51 carries the post-translational modification Phosphoserine.

It belongs to the FKBP-type PPIase family. FKBP1 subfamily. In terms of assembly, interacts with HOM3; the interaction is direct, plays a role in feedback inhibition of aspartokinase by threonine, and is inhibited by tacrolimus and sirolimus. Interacts with HMO1. Interacts with FAP1.

It is found in the cytoplasm. It localises to the mitochondrion. It catalyses the reaction [protein]-peptidylproline (omega=180) = [protein]-peptidylproline (omega=0). PPIases accelerate the folding of proteins. It catalyzes the cis-trans isomerization of proline imidic peptide bonds in oligopeptides. Plays a role in feedback inhibition of the pathway synthesizing the aspartate family of amino acids by binding to aspartokinase. The protein is FK506-binding protein 1 (FPR1) of Saccharomyces cerevisiae (strain ATCC 204508 / S288c) (Baker's yeast).